A 150-amino-acid chain; its full sequence is Aspartate 1-decarboxylase (150 aa).

Residue serine 24 is the Schiff-base intermediate with substrate; via pyruvic acid of the active site. Serine 24 is subject to Pyruvic acid (Ser). Threonine 56 is a binding site for substrate. Tyrosine 57 acts as the Proton donor in catalysis. Glycine 72–alanine 74 provides a ligand contact to substrate.

The protein belongs to the PanD family. As to quaternary structure, heterooctamer of four alpha and four beta subunits. Pyruvate is required as a cofactor. In terms of processing, is synthesized initially as an inactive proenzyme, which is activated by self-cleavage at a specific serine bond to produce a beta-subunit with a hydroxyl group at its C-terminus and an alpha-subunit with a pyruvoyl group at its N-terminus.

Its subcellular location is the cytoplasm. It carries out the reaction L-aspartate + H(+) = beta-alanine + CO2. The protein operates within cofactor biosynthesis; (R)-pantothenate biosynthesis; beta-alanine from L-aspartate: step 1/1. Its function is as follows. Catalyzes the pyruvoyl-dependent decarboxylation of aspartate to produce beta-alanine. The chain is Aspartate 1-decarboxylase from Xanthobacter autotrophicus (strain ATCC BAA-1158 / Py2).